Here is a 274-residue protein sequence, read N- to C-terminus: Protein FAM210A (274 aa).

Residues 51–66 (KWLHSQPKQQDSSTKT) are compositionally biased toward polar residues. The interval 51-91 (KWLHSQPKQQDSSTKTPVHDLPSGSQHQSEESSPSAKSSIS) is disordered. Over residues 81–91 (ESSPSAKSSIS) the composition is skewed to low complexity. The region spanning 105 to 217 (DQSIGLLKRF…GYLSTPPLVK (113 aa)) is the DUF1279 domain. The chain crosses the membrane as a helical span at residues 124–144 (VLIPVHLVTSSFWFGSFYYAA). The stretch at 221-274 (QDRMEETKELFTEKMEETRDIISGKMEETKDRISEKLQETKDRVAFRKKKNEEM) forms a coiled coil.

The protein belongs to the FAM210 family.

Its subcellular location is the membrane. It localises to the mitochondrion. The protein localises to the cytoplasm. Functionally, may play a role in the structure and strength of both muscle and bone. In Xenopus tropicalis (Western clawed frog), this protein is Protein FAM210A (fam210a).